Consider the following 403-residue polypeptide: Nucleolar protein 13 (403 aa).

Basic and acidic residues-rich tracts occupy residues 1–35 (MSET…RKAE) and 75–97 (KSIE…KDAQ). 2 disordered regions span residues 1-43 (MSET…IDLK) and 72-116 (IDPK…EVVK). An N-acetylserine modification is found at Ser-2. Residue Ser-2 is modified to Phosphoserine. Residues 99–108 (EESTINTPTG) show a composition bias toward polar residues. Thr-105 bears the Phosphothreonine mark. RRM domains follow at residues 125-219 (YGVW…DSEN) and 239-317 (RILF…YGED). Over residues 313 to 329 (EYGEDRSKRQVRKKVEN) the composition is skewed to basic and acidic residues. Positions 313–403 (EYGEDRSKRQ…PSQGKKVKFD (91 aa)) are disordered. The span at 330-344 (VSRNNSSSFDISNNK) shows a compositional bias: polar residues. Ser-335 carries the phosphoserine modification. A compositionally biased stretch (basic and acidic residues) spans 345 to 361 (GYDRAGQDNGSKPEYKR). Positions 371-381 (DSNNRTKSSVA) are enriched in polar residues.

Its subcellular location is the nucleus. It localises to the nucleolus. The polypeptide is Nucleolar protein 13 (NOP13) (Saccharomyces cerevisiae (strain ATCC 204508 / S288c) (Baker's yeast)).